Here is a 1069-residue protein sequence, read N- to C-terminus: Kinesin-like protein vab-8 (1069 aa).

Residues 15 to 325 (PLRTIPKLRL…ACKIARTRVK (311 aa)) enclose the Kinesin motor domain. 3 disordered regions span residues 328–374 (MGHG…LESG), 391–436 (SRTT…KSSP), and 572–598 (EQEE…RILS). Interaction with unc-51 regions lie at residues 331–517 (GRKP…KSKY) and 517–719 (YNLD…TVVD). 2 stretches are compositionally biased toward low complexity: residues 339 to 364 (SSGT…GTPR) and 391 to 407 (SRTT…TPTS). Positions 403–877 (STPTSIRPLH…SAERDRKTSK (475 aa)) are interaction with unc-73. Residues 719 to 769 (DWSQIERKKEREKDAMEEEKRKEVLRERRAKLKITELEIKRERNMIDKELD) are a coiled coil. The disordered stretch occupies residues 786-960 (SLSPCRGGRT…RQSYSASSGY (175 aa)). Residues 824–847 (GGSLAKLSASGASGSGPPSSPSLG) are compositionally biased toward low complexity. The segment covering 883-897 (SSKERRSSGSKEELQ) has biased composition (basic and acidic residues). The segment covering 906–928 (TSPKTYGGPGTSSSGRGSSAPGS) has biased composition (low complexity). Over residues 938 to 960 (TEKTANGTMPRSKRQSYSASSGY) the composition is skewed to polar residues. Residues 990 to 1027 (LVRQADEIRHRQWQLKKELEEAKRAIGQEEDAKMIANS) adopt a coiled-coil conformation.

Belongs to the TRAFAC class myosin-kinesin ATPase superfamily. Kinesin family. KIF26 subfamily. In terms of assembly, interacts with unc-51 and unc-73. In terms of processing, phosphorylated by unc-51.

It is found in the cytoplasm. The protein localises to the cytoskeleton. Required for posterior migration of cells and axon growth cones during nervous system assembly. In PLM neuron, regulates innexin unc-9 gap junction turnover by suppressing unc-9 transport out of the gap junctions. This chain is Kinesin-like protein vab-8 (vab-8), found in Caenorhabditis briggsae.